The primary structure comprises 345 residues: Uroporphyrinogen decarboxylase (345 aa).

Residues 27 to 31 (RQAGR), Phe46, Asp76, Tyr152, Ser207, and His321 each bind substrate.

This sequence belongs to the uroporphyrinogen decarboxylase family. As to quaternary structure, homodimer.

It is found in the cytoplasm. It carries out the reaction uroporphyrinogen III + 4 H(+) = coproporphyrinogen III + 4 CO2. It participates in porphyrin-containing compound metabolism; protoporphyrin-IX biosynthesis; coproporphyrinogen-III from 5-aminolevulinate: step 4/4. Its function is as follows. Catalyzes the decarboxylation of four acetate groups of uroporphyrinogen-III to yield coproporphyrinogen-III. The protein is Uroporphyrinogen decarboxylase of Staphylococcus aureus (strain Mu3 / ATCC 700698).